Here is a 183-residue protein sequence, read N- to C-terminus: Capsid protein (183 aa).

The tract at residues 136 to 183 is disordered; the sequence is NAPILSTLPETTVVRQRGRAPRRRTPSPRRRRSQSPRRRRSQSPASQC. The span at 151-176 shows a compositional bias: basic residues; it reads QRGRAPRRRTPSPRRRRSQSPRRRRS. A 1; half-length repeat occupies 155-161; it reads APRRRTP. Residues 155 to 177 are 3 X 8 AA repeats of S-P-R-R-R-[PR]-S-Q; the sequence is APRRRTPSPRRRRSQSPRRRRSQ. A Bipartite nuclear localization signal motif is present at residues 158–175; it reads RRTPSPRRRRSQSPRRRR. Residues S162 and S170 each carry the phosphoserine; by host modification. 2 tandem repeats follow at residues 162–169 and 170–177. Residues 177 to 183 are RNA binding; that stretch reads QSPASQC.

It belongs to the orthohepadnavirus core antigen family. In terms of assembly, homodimerizes, then multimerizes. Interacts with cytosol exposed regions of viral L glycoprotein present in the reticulum-to-Golgi compartment. Interacts with human FLNB. Phosphorylated form interacts with host importin alpha; this interaction depends on the exposure of the NLS, which itself depends upon genome maturation and/or phosphorylation of the capsid protein. Interacts with host NUP153. Phosphorylated by host SRPK1, SRPK2, and maybe protein kinase C or GAPDH. Phosphorylation is critical for pregenomic RNA packaging. Protein kinase C phosphorylation is stimulated by HBx protein and may play a role in transport of the viral genome to the nucleus at the late step during the viral replication cycle.

The protein resides in the virion. The protein localises to the host cytoplasm. Functionally, self assembles to form an icosahedral capsid. Most capsids appear to be large particles with an icosahedral symmetry of T=4 and consist of 240 copies of capsid protein, though a fraction forms smaller T=3 particles consisting of 180 capsid proteins. Entering capsids are transported along microtubules to the nucleus. Phosphorylation of the capsid is thought to induce exposure of nuclear localization signal in the C-terminal portion of the capsid protein that allows binding to the nuclear pore complex via the importin (karyopherin-) alpha and beta. Capsids are imported in intact form through the nuclear pore into the nuclear basket, where it probably binds NUP153. Only capsids that contain the mature viral genome can release the viral DNA and capsid protein into the nucleoplasm. Immature capsids get stuck in the basket. Capsids encapsulate the pre-genomic RNA and the P protein. Pre-genomic RNA is reverse-transcribed into DNA while the capsid is still in the cytoplasm. The capsid can then either be directed to the nucleus, providing more genomes for transcription, or bud through the endoplasmic reticulum to provide new virions. In Homo sapiens (Human), this protein is Capsid protein.